A 476-amino-acid polypeptide reads, in one-letter code: Aspartyl/glutamyl-tRNA(Asn/Gln) amidotransferase subunit B (476 aa).

It belongs to the GatB/GatE family. GatB subfamily. In terms of assembly, heterotrimer of A, B and C subunits.

The enzyme catalyses L-glutamyl-tRNA(Gln) + L-glutamine + ATP + H2O = L-glutaminyl-tRNA(Gln) + L-glutamate + ADP + phosphate + H(+). It carries out the reaction L-aspartyl-tRNA(Asn) + L-glutamine + ATP + H2O = L-asparaginyl-tRNA(Asn) + L-glutamate + ADP + phosphate + 2 H(+). In terms of biological role, allows the formation of correctly charged Asn-tRNA(Asn) or Gln-tRNA(Gln) through the transamidation of misacylated Asp-tRNA(Asn) or Glu-tRNA(Gln) in organisms which lack either or both of asparaginyl-tRNA or glutaminyl-tRNA synthetases. The reaction takes place in the presence of glutamine and ATP through an activated phospho-Asp-tRNA(Asn) or phospho-Glu-tRNA(Gln). The polypeptide is Aspartyl/glutamyl-tRNA(Asn/Gln) amidotransferase subunit B (Lacticaseibacillus paracasei (strain ATCC 334 / BCRC 17002 / CCUG 31169 / CIP 107868 / KCTC 3260 / NRRL B-441) (Lactobacillus paracasei)).